Here is a 241-residue protein sequence, read N- to C-terminus: Type III pantothenate kinase (241 aa).

6–13 (DVGNTRIK) contributes to the ATP binding site. 94–97 (GIDR) is a substrate binding site. The active-site Proton acceptor is D96. K(+) is bound at residue D117. T120 serves as a coordination point for ATP. Residue T172 coordinates substrate.

This sequence belongs to the type III pantothenate kinase family. In terms of assembly, homodimer. The cofactor is NH4(+). K(+) is required as a cofactor.

It is found in the cytoplasm. It carries out the reaction (R)-pantothenate + ATP = (R)-4'-phosphopantothenate + ADP + H(+). It functions in the pathway cofactor biosynthesis; coenzyme A biosynthesis; CoA from (R)-pantothenate: step 1/5. In terms of biological role, catalyzes the phosphorylation of pantothenate (Pan), the first step in CoA biosynthesis. This chain is Type III pantothenate kinase, found in Flavobacterium psychrophilum (strain ATCC 49511 / DSM 21280 / CIP 103535 / JIP02/86).